The sequence spans 290 residues: Pyridoxal kinase PdxY (290 aa).

Residues serine 12 and 47 to 48 contribute to the substrate site; that span reads TQ. ATP contacts are provided by residues aspartate 114, glutamate 151, lysine 184, and 211 to 214; that span reads RPLL. A substrate-binding site is contributed by aspartate 225.

It belongs to the pyridoxine kinase family. PdxY subfamily. In terms of assembly, homodimer. Mg(2+) serves as cofactor.

The catalysed reaction is pyridoxal + ATP = pyridoxal 5'-phosphate + ADP + H(+). The protein operates within cofactor metabolism; pyridoxal 5'-phosphate salvage; pyridoxal 5'-phosphate from pyridoxal: step 1/1. In terms of biological role, pyridoxal kinase involved in the salvage pathway of pyridoxal 5'-phosphate (PLP). Catalyzes the phosphorylation of pyridoxal to PLP. The protein is Pyridoxal kinase PdxY of Pseudomonas fluorescens (strain SBW25).